Here is a 178-residue protein sequence, read N- to C-terminus: Interleukin-10 (178 aa).

The signal sequence occupies residues 1–18 (MHSSALLCCLVFLTGVRA). Disulfide bonds link Cys-30/Cys-126 and Cys-80/Cys-132. Asn-134 carries N-linked (GlcNAc...) asparagine glycosylation.

The protein belongs to the IL-10 family. In terms of assembly, homodimer. Interacts with IL10RA and IL10RB.

Its subcellular location is the secreted. In terms of biological role, major immune regulatory cytokine that acts on many cells of the immune system where it has profound anti-inflammatory functions, limiting excessive tissue disruption caused by inflammation. Mechanistically, IL10 binds to its heterotetrameric receptor comprising IL10RA and IL10RB leading to JAK1 and STAT2-mediated phosphorylation of STAT3. In turn, STAT3 translocates to the nucleus where it drives expression of anti-inflammatory mediators. Targets antigen-presenting cells (APCs) such as macrophages and monocytes and inhibits their release of pro-inflammatory cytokines including granulocyte-macrophage colony-stimulating factor /GM-CSF, granulocyte colony-stimulating factor/G-CSF, IL-1 alpha, IL-1 beta, IL-6, IL-8 and TNF-alpha. Also interferes with antigen presentation by reducing the expression of MHC-class II and co-stimulatory molecules, thereby inhibiting their ability to induce T cell activation. In addition, controls the inflammatory response of macrophages by reprogramming essential metabolic pathways including mTOR signaling. The sequence is that of Interleukin-10 (IL10) from Callithrix jacchus (White-tufted-ear marmoset).